The chain runs to 453 residues: Ribulose bisphosphate carboxylase large chain (453 aa).

The propeptide occupies 1–2 (MS). N-acetylproline is present on Pro3. N6,N6,N6-trimethyllysine is present on Lys14. Substrate-binding residues include Asn123 and Thr173. Lys175 acts as the Proton acceptor in catalysis. Lys177 is a binding site for substrate. Mg(2+)-binding residues include Lys201, Asp203, and Glu204. Lys201 bears the N6-carboxylysine mark. The active-site Proton acceptor is His294. Residues Arg295, His327, and Ser379 each coordinate substrate.

This sequence belongs to the RuBisCO large chain family. Type I subfamily. As to quaternary structure, heterohexadecamer of 8 large chains and 8 small chains; disulfide-linked. The disulfide link is formed within the large subunit homodimers. Mg(2+) is required as a cofactor. In terms of processing, the disulfide bond which can form in the large chain dimeric partners within the hexadecamer appears to be associated with oxidative stress and protein turnover.

It localises to the plastid. Its subcellular location is the chloroplast. The catalysed reaction is 2 (2R)-3-phosphoglycerate + 2 H(+) = D-ribulose 1,5-bisphosphate + CO2 + H2O. It catalyses the reaction D-ribulose 1,5-bisphosphate + O2 = 2-phosphoglycolate + (2R)-3-phosphoglycerate + 2 H(+). Functionally, ruBisCO catalyzes two reactions: the carboxylation of D-ribulose 1,5-bisphosphate, the primary event in carbon dioxide fixation, as well as the oxidative fragmentation of the pentose substrate in the photorespiration process. Both reactions occur simultaneously and in competition at the same active site. The sequence is that of Ribulose bisphosphate carboxylase large chain from Galium elongatum (Great marsh bedstraw).